A 373-amino-acid chain; its full sequence is UDP-N-acetylglucosamine--N-acetylmuramyl-(pentapeptide) pyrophosphoryl-undecaprenol N-acetylglucosamine transferase (373 aa).

Residues 16–18 (TGG), N128, R164, S192, I250, and Q295 each bind UDP-N-acetyl-alpha-D-glucosamine.

The protein belongs to the glycosyltransferase 28 family. MurG subfamily.

The protein resides in the cell inner membrane. The catalysed reaction is di-trans,octa-cis-undecaprenyl diphospho-N-acetyl-alpha-D-muramoyl-L-alanyl-D-glutamyl-meso-2,6-diaminopimeloyl-D-alanyl-D-alanine + UDP-N-acetyl-alpha-D-glucosamine = di-trans,octa-cis-undecaprenyl diphospho-[N-acetyl-alpha-D-glucosaminyl-(1-&gt;4)]-N-acetyl-alpha-D-muramoyl-L-alanyl-D-glutamyl-meso-2,6-diaminopimeloyl-D-alanyl-D-alanine + UDP + H(+). Its pathway is cell wall biogenesis; peptidoglycan biosynthesis. Its function is as follows. Cell wall formation. Catalyzes the transfer of a GlcNAc subunit on undecaprenyl-pyrophosphoryl-MurNAc-pentapeptide (lipid intermediate I) to form undecaprenyl-pyrophosphoryl-MurNAc-(pentapeptide)GlcNAc (lipid intermediate II). This is UDP-N-acetylglucosamine--N-acetylmuramyl-(pentapeptide) pyrophosphoryl-undecaprenol N-acetylglucosamine transferase from Paraburkholderia phymatum (strain DSM 17167 / CIP 108236 / LMG 21445 / STM815) (Burkholderia phymatum).